The primary structure comprises 242 residues: DNA repair protein RecO (242 aa).

The protein belongs to the RecO family.

Involved in DNA repair and RecF pathway recombination. This Wolbachia pipientis subsp. Culex pipiens (strain wPip) protein is DNA repair protein RecO.